The chain runs to 326 residues: Cell surface glycoprotein CD200 receptor 1 (326 aa).

The first 25 residues, 1–25, serve as a signal peptide directing secretion; it reads MFCFWRTSALAVLLIWGVFVAGSSC. The Extracellular portion of the chain corresponds to 26–238; sequence TDKNQTTQNN…SRGGNQSLRP (213 aa). Asparagine 29, asparagine 34, asparagine 35, asparagine 44, asparagine 93, asparagine 101, asparagine 159, asparagine 192, asparagine 207, asparagine 221, and asparagine 233 each carry an N-linked (GlcNAc...) asparagine glycan. The region spanning 51 to 136 is the Ig-like V-type domain; it reads IGTKALLCCF…YTCETVTPEG (86 aa). 2 disulfide bridges follow: cysteine 58-cysteine 129 and cysteine 82-cysteine 97. One can recognise an Ig-like C2-type domain in the interval 138–229; it reads FEKNYDLQVL…GNQSLSIELS (92 aa). Disulfide bonds link cysteine 164-cysteine 213 and cysteine 183-cysteine 201. The chain crosses the membrane as a helical span at residues 239-259; it reads YIPYIIPSIIILIIIGCICLL. Topologically, residues 260–326 are cytoplasmic; that stretch reads KISGFRKCKL…DCLTLSAIGI (67 aa).

Belongs to the CD200R family. CD200 and CD200R1 interact via their respective N-terminal Ig-like domains. In terms of tissue distribution, expressed in granulocytes, monocytes, most T-cells and a subset of NK, NKT and B-cells (at protein level). Expressed in the spleen, lung, liver, testis, bone marrow, lymph nodes, spinal cord, kidney, uterus and small intestine. Expressed in mast and dendritic cells. Expressed in the lung of N.brasiliensis-infected mice.

It is found in the cell membrane. Its function is as follows. Inhibitory receptor for the CD200/OX2 cell surface glycoprotein. Limits inflammation by inhibiting the expression of pro-inflammatory molecules including TNF-alpha, interferons, and inducible nitric oxide synthase (iNOS) in response to selected stimuli. This chain is Cell surface glycoprotein CD200 receptor 1 (Cd200r1), found in Mus musculus (Mouse).